We begin with the raw amino-acid sequence, 887 residues long: 3-hydroxy-3-methylglutaryl-coenzyme A reductase (887 aa).

The Cytoplasmic segment spans residues 1-9; sequence MLSRLFRMH. Residues 10–39 form a helical membrane-spanning segment; sequence GLFVASHPWEVIVGTVTLTICMMSMNMFTG. Residues 40-56 lie on the Lumenal side of the membrane; it reads NNKICGWNYECPKFEED. The chain crosses the membrane as a helical span at residues 57–78; sequence VLSSDIIILTITRCIAILYIYF. The SSD domain maps to 61–218; sequence DIIILTITRC…MTFFPACVSL (158 aa). An INSIG-binding motif motif is present at residues 75–78; the sequence is YIYF. Topologically, residues 79–89 are cytoplasmic; the sequence is QFQNLRQLGSK. Lys89 participates in a covalent cross-link: Glycyl lysine isopeptide (Lys-Gly) (interchain with G-Cter in ubiquitin). Residues 90–114 traverse the membrane as a helical segment; it reads YILGIAGLFTIFSSFVFSTVVIHFL. At 115-123 the chain is on the lumenal side; the sequence is DKELTGLNE. The helical transmembrane segment at 124–149 threads the bilayer; the sequence is ALPFFLLLIDLSRASALAKFALSSNS. Over 150-159 the chain is Cytoplasmic; sequence QDEVRENIAR. The helical transmembrane segment at 160 to 187 threads the bilayer; it reads GMAILGPTFTLDALVECLVIGVGTMSGV. Over 188-191 the chain is Lumenal; the sequence is RQLE. Residues 192–220 form a helical membrane-spanning segment; sequence IMCCFGCMSVLANYFVFMTFFPACVSLVL. At 221–248 the chain is on the cytoplasmic side; sequence ELSRESREGRPIWQLSHFARVLEEEENK. Lys248 participates in a covalent cross-link: Glycyl lysine isopeptide (Lys-Gly) (interchain with G-Cter in ubiquitin). A helical transmembrane segment spans residues 249-275; the sequence is PNPVTQRVKMIMSLGLVLVHAHSRWIA. Topologically, residues 276 to 314 are lumenal; sequence DPSPQNSTTEHSKVSLGLDEDVSKRIEPSVSLWQFYLSK. An N-linked (GlcNAc...) asparagine glycan is attached at Asn281. Residues 315–339 form a helical membrane-spanning segment; the sequence is MISMDIEQVVTLSLAFLLAVKYIFF. The Cytoplasmic segment spans residues 340 to 887; the sequence is EQAETESTLS…LQGTCTKKSA (548 aa). Residues Glu558, Lys690, and Asp766 each act as charge relay system in the active site. His865 acts as the Proton donor in catalysis. The residue at position 871 (Ser871) is a Phosphoserine; by AMPK.

Belongs to the HMG-CoA reductase family. As to quaternary structure, homotetramer. Homodimer. Interacts (via its SSD) with INSIG1; the interaction, accelerated by sterols, leads to the recruitment of HMGCR to AMFR/gp78 for its ubiquitination by the sterol-mediated ERAD pathway. Interacts with UBIAD1. N-glycosylated. Glycosylated with high mannose chains including Man(6)(GlcNAc)(2), Man(7)(GlcNAc)(2) and Man(8)(GlcNAc)(2). Deglycosylated by NGLY1 on release from the endoplasmic reticulum (ER) in a sterol-mediated manner. In terms of processing, undergoes sterol-mediated ubiquitination and ER-associated degradation (ERAD). Accumulation of sterols in the endoplasmic reticulum (ER) membrane, triggers binding of the reductase to the ER membrane protein INSIG1 or INSIG2. The INSIG1 binding leads to the recruitment of the ubiquitin ligase, AMFR/gp78, RNF139 or RNF145, initiating ubiquitination of the reductase. The ubiquitinated reductase is then extracted from the ER membrane and delivered to cytosolic 26S proteosomes by a mechanism probably mediated by the ATPase Valosin-containing protein VCP/p97. The INSIG2-binding leads to the recruitment of the ubiquitin ligase RNF139, initiating ubiquitination of the reductase. Lys-248 is the main site of ubiquitination. Ubiquitination is enhanced by the presence of a geranylgeranylated protein. Post-translationally, phosphorylated. Phosphorylation at Ser-871 reduces the catalytic activity.

It localises to the endoplasmic reticulum membrane. The protein localises to the peroxisome membrane. The catalysed reaction is (R)-mevalonate + 2 NADP(+) + CoA = (3S)-3-hydroxy-3-methylglutaryl-CoA + 2 NADPH + 2 H(+). It functions in the pathway metabolic intermediate biosynthesis; (R)-mevalonate biosynthesis; (R)-mevalonate from acetyl-CoA: step 3/3. Regulated by a negative feedback mechanism through sterols and non-sterol metabolites derived from mevalonate. Phosphorylation at Ser-871 down-regulates the catalytic activity. Catalyzes the conversion of (3S)-hydroxy-3-methylglutaryl-CoA (HMG-CoA) to mevalonic acid, the rate-limiting step in the synthesis of cholesterol and other isoprenoids, thus plays a critical role in cellular cholesterol homeostasis. The sequence is that of 3-hydroxy-3-methylglutaryl-coenzyme A reductase (HMGCR) from Cricetulus griseus (Chinese hamster).